A 106-amino-acid chain; its full sequence is Transcription factor TRY (106 aa).

The region spanning 34 to 71 (TEQEEDLIFRMYRLVGDRWDLIAGRVPGRQPEEIERYW) is the Myb-like domain. Residues 83-106 (RRQLHSSSHKHTKPHRPRFSIYPS) are disordered. The segment covering 84–100 (RQLHSSSHKHTKPHRPR) has biased composition (basic residues).

In terms of assembly, interacts with GL3 and thus prevents GL1 GL3 interaction. Also interacts with BHLH2. In terms of tissue distribution, expressed in roots, leaves, siliques and inflorescences.

The protein resides in the nucleus. Transcription factor. Involved in epidermal cell fate specification. Negative regulator of trichome development, including endoreplication, by lateral inhibition involving intercellular interactions. Promotes the formation of hair developing cells (trichoblasts) in H position in root epidermis, probably by inhibiting non-hair cell (atrichoblasts) formation. The sequence is that of Transcription factor TRY (TRY) from Arabidopsis thaliana (Mouse-ear cress).